The chain runs to 589 residues: V-type ATP synthase alpha chain (589 aa).

Residue 232-239 (GPFGSGKT) coordinates ATP.

The protein belongs to the ATPase alpha/beta chains family.

The enzyme catalyses ATP + H2O + 4 H(+)(in) = ADP + phosphate + 5 H(+)(out). In terms of biological role, produces ATP from ADP in the presence of a proton gradient across the membrane. The V-type alpha chain is a catalytic subunit. In Acetivibrio thermocellus (strain ATCC 27405 / DSM 1237 / JCM 9322 / NBRC 103400 / NCIMB 10682 / NRRL B-4536 / VPI 7372) (Clostridium thermocellum), this protein is V-type ATP synthase alpha chain.